A 494-amino-acid chain; its full sequence is UPF0371 protein spr0309 (494 aa).

This sequence belongs to the UPF0371 family.

The polypeptide is UPF0371 protein spr0309 (Streptococcus pneumoniae (strain ATCC BAA-255 / R6)).